We begin with the raw amino-acid sequence, 687 residues long: Homoaconitase, mitochondrial (687 aa).

The N-terminal 18 residues, 1–18 (MFAFRNRAVTQTLLVRRY), are a transit peptide targeting the mitochondrion. Positions 340, 400, and 403 each coordinate [4Fe-4S] cluster. Residues 481–490 (EAEADAEAAE) are compositionally biased toward acidic residues. Positions 481-500 (EAEADAEAAESDPAPSGGVL) are disordered.

This sequence belongs to the aconitase/IPM isomerase family. Requires [4Fe-4S] cluster as cofactor.

The protein localises to the mitochondrion. The catalysed reaction is (2R,3S)-homoisocitrate = cis-homoaconitate + H2O. The protein operates within amino-acid biosynthesis; L-lysine biosynthesis via AAA pathway; L-alpha-aminoadipate from 2-oxoglutarate: step 3/5. Functionally, catalyzes the reversible hydration of cis-homoaconitate to (2R,3S)-homoisocitrate, a step in the alpha-aminoadipate pathway for lysine biosynthesis. This chain is Homoaconitase, mitochondrial (LYS4), found in Yarrowia lipolytica (strain CLIB 122 / E 150) (Yeast).